Here is a 127-residue protein sequence, read N- to C-terminus: Serum amyloid A protein (127 aa).

The first 18 residues, 1–18 (MKLLTSLFLLSLVLCVNS), serve as a signal peptide directing secretion. The residue at position 19 (Q19) is a Pyrrolidone carboxylic acid. The segment at 89 to 127 (GGSSGRGVEDSMADQEANRWGRSGKDPNRYRPKGLDPKY) is disordered. The span at 104–127 (EANRWGRSGKDPNRYRPKGLDPKY) shows a compositional bias: basic and acidic residues.

This sequence belongs to the SAA family. In terms of tissue distribution, expressed by the liver; secreted in plasma.

It is found in the secreted. In terms of biological role, major acute phase reactant. Apolipoprotein of the HDL complex. The protein is Serum amyloid A protein (SAA1) of Notamacropus eugenii (Tammar wallaby).